A 197-amino-acid polypeptide reads, in one-letter code: Recombination protein RecR (197 aa).

The segment at 56–71 (CHVCGNYCESDTCNIC) adopts a C4-type zinc-finger fold. A Toprim domain is found at 79 to 174 (RIICVVEESK…KITKLASGIP (96 aa)).

This sequence belongs to the RecR family.

In terms of biological role, may play a role in DNA repair. It seems to be involved in an RecBC-independent recombinational process of DNA repair. It may act with RecF and RecO. This is Recombination protein RecR from Fusobacterium nucleatum subsp. nucleatum (strain ATCC 25586 / DSM 15643 / BCRC 10681 / CIP 101130 / JCM 8532 / KCTC 2640 / LMG 13131 / VPI 4355).